The chain runs to 131 residues: Small ribosomal subunit protein bS6 (131 aa).

Positions 98-131 (EASPMVKAKDERRERREDFANETADDSEAGDSEE) are disordered. Positions 104–116 (KAKDERRERREDF) are enriched in basic and acidic residues. The span at 120–131 (TADDSEAGDSEE) shows a compositional bias: acidic residues.

Belongs to the bacterial ribosomal protein bS6 family.

In terms of biological role, binds together with bS18 to 16S ribosomal RNA. This chain is Small ribosomal subunit protein bS6, found in Klebsiella pneumoniae (strain 342).